Here is a 133-residue protein sequence, read N- to C-terminus: Small ribosomal subunit protein uS8 (133 aa).

It belongs to the universal ribosomal protein uS8 family. Part of the 30S ribosomal subunit. Contacts proteins S5 and S12.

Its function is as follows. One of the primary rRNA binding proteins, it binds directly to 16S rRNA central domain where it helps coordinate assembly of the platform of the 30S subunit. The polypeptide is Small ribosomal subunit protein uS8 (Prochlorococcus marinus (strain MIT 9303)).